The chain runs to 820 residues: MSAPSEEEEYARLVMEAQPEWLRAEVKRLSHELAETTREKIQAAEYGLAVLEEKHQLKLQFEELEVDYEAIRSEMEQLKEAFGQAHTNHKKVAADGESREESLIQESASKEQYYVRKVLELQTELKQLRNVLTNTQSENERLTSVAQELKEINQNVEIQRGRLRDDIKEYKFREARLLQDYSELEEENISLQKQVSVLRQNQVEFEGLKHEIKRLEEETEYLNSQLEDAIRLKEISERQLEEALETLKTEREQKNNLRKELSHYMSINDSFYTSHLQVSLDGLKFSDDTVTAEPNNDAEALVNGFEHSGLVKSSLDNKTSTPRKDGLAPPSPSLVSDLLSELHISEIQKLKQQLVQMEREKVGLLATLQDTQKQLEQARGTLSEQHEKVNRLTENLSALRRLQAGKERQTSLDNEKDRDSHEDGDYYEVDINGPEILACKYHVAVAEAGELREQLKALRSTHEAREAQHAEEKGRYEAEGQALTEKISLLEKASHQDRELLAHLEKELKKVSDVAGETQGSLNVAQDELVTFSEELANLYHHVCMCNNETPNRVMLDYYREGQGKAGRTSPEGRGRRSPVLLPKGLLATEVGRADGGTGDNSPSPSSSLPSPLSDPRREPMNIYNLIAIIRDQIKHLQAAVDRTTELSRQRIASQELGPAVDKDKEALMEEILKLKSLLSTKREQITTLRTVLKANKQTAEVALANLKSKYENEKAMVTETMMKLRNELKALKEDAATFSSLRAMFATRCDEYITQLDEMQRQLAAAEDEKKTLNSLLRMAIQQKLALTQRLELLELDHEQTRRGRSKAASKAKPASPSL.

Serine 2 bears the N-acetylserine mark. Residues 20–270 (EWLRAEVKRL…LSHYMSINDS (251 aa)) adopt a coiled-coil conformation. Residues 25–400 (EVKRLSHELA…RLTENLSALR (376 aa)) form an interaction with DYNLL1, DYNC1H1, DYNC1I2, DCTN1 and DCTN2 region. Phosphoserine occurs at positions 190, 224, and 320. The tract at residues 313–332 (SSLDNKTSTPRKDGLAPPSP) is disordered. A Phosphothreonine modification is found at threonine 321. The segment at 336-595 (SDLLSELHIS…LLATEVGRAD (260 aa)) is interaction with KIF5A. Positions 340 to 539 (SELHISEIQK…VTFSEELANL (200 aa)) form a coiled coil. Serine 345 and serine 397 each carry phosphoserine. Disordered stretches follow at residues 400–427 (RRLQ…GDYY), 563–582 (QGKA…PVLL), 591–618 (VGRA…DPRR), and 799–820 (HEQT…SPSL). Residues 404 to 424 (AGKERQTSLDNEKDRDSHEDG) are compositionally biased toward basic and acidic residues. Serine 570 and serine 578 each carry phosphoserine. Residues 586–820 (LLATEVGRAD…SKAKPASPSL (235 aa)) are interaction with RANBP2. Phosphothreonine is present on threonine 598. Positions 602–614 (SPSPSSSLPSPLS) are enriched in low complexity. Residues 662 to 804 (DKDKEALMEE…LELDHEQTRR (143 aa)) adopt a coiled-coil conformation. The interval 662-810 (DKDKEALMEE…QTRRGRSKAA (149 aa)) is interaction with RAB6A. Residue serine 819 is modified to Phosphoserine.

This sequence belongs to the BicD family. In terms of assembly, part of a tripartite complex with dynein and dynactin, acts an adapter linking the dynein motor complex and dynactin. Interacts with CPNE4 (via VWFA domain). Interacts with NEK9. Interacts with DCTN2. Interacts with RAB6A. Interacts with DNAI1. Interacts with DYNLL1, DYNC1H1, DYNC1I2 and DCTN1. Forms a complex with dynein and dynactin. The dynein-dynactin-BICD2 ternary complex (DDB) binds preferentially to tyrosinated microtubules than to detyrosinated microtubules. Interacts with RANBP2, RAB6A and KIF5A. Interacts with KIF1C. Post-translationally, phosphorylated by NEK9 in vitro. In terms of tissue distribution, ubiquitously expressed with high expression in the spinal cord.

Its subcellular location is the golgi apparatus. It localises to the cytoplasm. It is found in the cytoskeleton. The protein localises to the nucleus. The protein resides in the nuclear pore complex. Its subcellular location is the nucleus envelope. Its function is as follows. Acts as an adapter protein linking the dynein motor complex to various cargos and converts dynein from a non-processive to a highly processive motor in the presence of dynactin. Facilitates and stabilizes the interaction between dynein and dynactin and activates dynein processivity (the ability to move along a microtubule for a long distance without falling off the track). Facilitates the binding of RAB6A to the Golgi by stabilizing its GTP-bound form. Regulates coat complex coatomer protein I (COPI)-independent Golgi-endoplasmic reticulum transport via its interaction with RAB6A and recruitment of the dynein-dynactin motor complex. Contributes to nuclear and centrosomal positioning prior to mitotic entry through regulation of both dynein and kinesin-1. During G2 phase of the cell cycle, associates with RANBP2 at the nuclear pores and recruits dynein and dynactin to the nuclear envelope to ensure proper positioning of the nucleus relative to centrosomes prior to the onset of mitosis. The chain is Protein bicaudal D homolog 2 (Bicd2) from Mus musculus (Mouse).